A 976-amino-acid chain; its full sequence is Vacuolar membrane protease (976 aa).

At 1–15 (MKLKSVFRSVLKYRK) the chain is on the cytoplasmic side. The chain crosses the membrane as a helical span at residues 16–36 (TNLSLLLLITYSIITLLYIFD). The Vacuolar portion of the chain corresponds to 37–359 (HERYKLNLPK…KFFVISAKTL (323 aa)). N-linked (GlcNAc...) asparagine glycosylation is found at N96 and N121. Residues H156 and D168 each coordinate Zn(2+). N-linked (GlcNAc...) asparagine glycosylation is present at N189. The active-site Proton acceptor is the E200. Residue E201 participates in Zn(2+) binding. N-linked (GlcNAc...) asparagine glycosylation is found at N212 and N217. 2 residues coordinate Zn(2+): E226 and H300. A helical transmembrane segment spans residues 360-380 (FYWNCIFLLVSPVVAIGLYLI). Topologically, residues 381–392 (SRDRMTWKSHSW) are cytoplasmic. Residues 393-412 (LSWTRFPLSLAAGIIVQKLF) form a helical membrane-spanning segment. At 413–428 (SNDIIRSNPLTFSRNY) the chain is on the vacuolar side. Residues 429 to 449 (FWPISAFFTQVIFTSYVLINC) form a helical membrane-spanning segment. The Cytoplasmic portion of the chain corresponds to 450–461 (SNFFFPCADMKS). The helical transmembrane segment at 462-482 (LSIIELFIILWTILLFTSKLL) threads the bilayer. The Vacuolar portion of the chain corresponds to 483–496 (YSSDYRYTGLYPLS). Residues 497–517 (IFFLLSTIAAILRLLALALGM) traverse the membrane as a helical segment. At 518–627 (RTRKRLGREC…NSLKLEYTDY (110 aa)) the chain is on the cytoplasmic side. Residues 528-610 (RDHHSNYSSH…PLLKGSNSME (83 aa)) are disordered. The span at 549-558 (NLEQPQDQFT) shows a compositional bias: polar residues. Over residues 559–570 (SSQDDQASIQDD) the composition is skewed to low complexity. The span at 582–601 (NVDEDHGMDSSSQQHDERVP) shows a compositional bias: basic and acidic residues. The chain crosses the membrane as a helical span at residues 628–648 (AWIIQFLLIVPIPSFILFNSV). Over 649–668 (DVIMDALNHTVQEGSKATFD) the chain is Vacuolar. N-linked (GlcNAc...) asparagine glycosylation is present at N656. A helical transmembrane segment spans residues 669–689 (VLRFGMVGSILIALPILPFFY). Residues 690–692 (KVN) lie on the Cytoplasmic side of the membrane. Residues 693-713 (YITISLTALLFLISASKTLLV) traverse the membrane as a helical segment. At 714–976 (HPFTNSNPLK…LVIVKDAIIL (263 aa)) the chain is on the vacuolar side. 5 N-linked (GlcNAc...) asparagine glycosylation sites follow: N768, N796, N811, N866, and N937.

Belongs to the peptidase M28 family. The cofactor is Zn(2+).

The protein resides in the vacuole membrane. In terms of biological role, may be involved in vacuolar sorting and osmoregulation. This Saccharomyces cerevisiae (strain JAY291) (Baker's yeast) protein is Vacuolar membrane protease.